A 323-amino-acid polypeptide reads, in one-letter code: Fructose-1,6-bisphosphatase class 1 (323 aa).

Mg(2+)-binding residues include E90, D111, L113, and D114. Substrate-binding positions include 114–117, Y222, and K253; that span reads DGSS. Residue E259 participates in Mg(2+) binding.

The protein belongs to the FBPase class 1 family. Homotetramer. Mg(2+) is required as a cofactor.

The protein localises to the cytoplasm. It carries out the reaction beta-D-fructose 1,6-bisphosphate + H2O = beta-D-fructose 6-phosphate + phosphate. Its pathway is carbohydrate biosynthesis; gluconeogenesis. This is Fructose-1,6-bisphosphatase class 1 from Pelobacter propionicus (strain DSM 2379 / NBRC 103807 / OttBd1).